We begin with the raw amino-acid sequence, 438 residues long: Aspartate--tRNA(Asp) ligase (438 aa).

Position 170 (E170) interacts with L-aspartate. The interval 192–195 (QLYK) is aspartate. R214 is a binding site for L-aspartate. ATP contacts are provided by residues 214–216 (RAE), 222–224 (RHL), and E361. Mg(2+) is bound by residues E361 and S364. Residues S364 and R368 each coordinate L-aspartate. Residue 409-412 (GAER) participates in ATP binding.

The protein belongs to the class-II aminoacyl-tRNA synthetase family. Type 2 subfamily. Homodimer. Mg(2+) is required as a cofactor.

Its subcellular location is the cytoplasm. It carries out the reaction tRNA(Asp) + L-aspartate + ATP = L-aspartyl-tRNA(Asp) + AMP + diphosphate. Its function is as follows. Catalyzes the attachment of L-aspartate to tRNA(Asp) in a two-step reaction: L-aspartate is first activated by ATP to form Asp-AMP and then transferred to the acceptor end of tRNA(Asp). This Pyrococcus horikoshii (strain ATCC 700860 / DSM 12428 / JCM 9974 / NBRC 100139 / OT-3) protein is Aspartate--tRNA(Asp) ligase.